The following is a 334-amino-acid chain: tRNA U34 carboxymethyltransferase (334 aa).

Residues lysine 91, tryptophan 105, lysine 110, glycine 130, 152 to 154 (DPT), 181 to 182 (IE), methionine 196, tyrosine 200, and arginine 315 each bind carboxy-S-adenosyl-L-methionine.

It belongs to the class I-like SAM-binding methyltransferase superfamily. CmoB family. In terms of assembly, homotetramer.

It catalyses the reaction carboxy-S-adenosyl-L-methionine + 5-hydroxyuridine(34) in tRNA = 5-carboxymethoxyuridine(34) in tRNA + S-adenosyl-L-homocysteine + H(+). Catalyzes carboxymethyl transfer from carboxy-S-adenosyl-L-methionine (Cx-SAM) to 5-hydroxyuridine (ho5U) to form 5-carboxymethoxyuridine (cmo5U) at position 34 in tRNAs. This is tRNA U34 carboxymethyltransferase from Klebsiella pneumoniae (strain 342).